The chain runs to 480 residues: Uridine 5'-monophosphate synthase (480 aa).

Ala2 carries the N-acetylalanine modification. The segment at 2 to 214 (AAADALLGSL…AFVAANPNDS (213 aa)) is OPRTase. Tyr37 bears the Phosphotyrosine mark. Ser214 is subject to Phosphoserine. The tract at residues 215–220 (LPSVKK) is domain linker. An OMPdecase region spans residues 221 to 480 (EPKELSFGAR…WEAYLSRLAV (260 aa)). Residue Ser257 participates in orotidine 5'-phosphate binding. UMP-binding positions include Ser257, Asp259, and 281 to 283 (KIH). Residues Lys281, Lys314, Asp317, Thr321, Ser372, 430 to 432 (QQY), and 450 to 451 (GR) contribute to the orotidine 5'-phosphate site. Catalysis depends on for OMPdecase activity residues Lys314 and Asp317. UMP contacts are provided by residues Asp317, Thr321, Ser372, 430–432 (QQY), and 450–451 (GR).

The protein in the N-terminal section; belongs to the purine/pyrimidine phosphoribosyltransferase family. It in the C-terminal section; belongs to the OMP decarboxylase family. Homodimer; dimerization is required for enzymatic activity.

The catalysed reaction is orotidine 5'-phosphate + diphosphate = orotate + 5-phospho-alpha-D-ribose 1-diphosphate. The enzyme catalyses orotidine 5'-phosphate + H(+) = UMP + CO2. The protein operates within pyrimidine metabolism; UMP biosynthesis via de novo pathway; UMP from orotate: step 1/2. It participates in pyrimidine metabolism; UMP biosynthesis via de novo pathway; UMP from orotate: step 2/2. Functionally, bifunctional enzyme catalyzing the last two steps of de novo pyrimidine biosynthesis, orotate phosphoribosyltransferase (OPRT), which converts orotate to orotidine-5'-monophosphate (OMP), and orotidine-5'-monophosphate decarboxylase (ODC), the terminal enzymatic reaction that decarboxylates OMP to uridine monophosphate (UMP). In Bos taurus (Bovine), this protein is Uridine 5'-monophosphate synthase (UMPS).